We begin with the raw amino-acid sequence, 185 residues long: Small ribosomal subunit protein uS7 (185 aa).

It belongs to the universal ribosomal protein uS7 family. Part of the 30S ribosomal subunit.

One of the primary rRNA binding proteins, it binds directly to 16S rRNA where it nucleates assembly of the head domain of the 30S subunit. Is located at the subunit interface close to the decoding center. This is Small ribosomal subunit protein uS7 from Methanothrix thermoacetophila (strain DSM 6194 / JCM 14653 / NBRC 101360 / PT) (Methanosaeta thermophila).